We begin with the raw amino-acid sequence, 124 residues long: ATP synthase epsilon chain (124 aa).

Belongs to the ATPase epsilon chain family. As to quaternary structure, F-type ATPases have 2 components, CF(1) - the catalytic core - and CF(0) - the membrane proton channel. CF(1) has five subunits: alpha(3), beta(3), gamma(1), delta(1), epsilon(1). CF(0) has three main subunits: a, b and c.

The protein resides in the cell membrane. In terms of biological role, produces ATP from ADP in the presence of a proton gradient across the membrane. In Streptomyces avermitilis (strain ATCC 31267 / DSM 46492 / JCM 5070 / NBRC 14893 / NCIMB 12804 / NRRL 8165 / MA-4680), this protein is ATP synthase epsilon chain.